The primary structure comprises 663 residues: 4-hydroxy-3-methylbut-2-en-1-yl diphosphate synthase (flavodoxin) (663 aa).

[4Fe-4S] cluster contacts are provided by Cys568, Cys571, Cys602, and Glu609.

Belongs to the IspG family. [4Fe-4S] cluster is required as a cofactor.

The catalysed reaction is (2E)-4-hydroxy-3-methylbut-2-enyl diphosphate + oxidized [flavodoxin] + H2O + 2 H(+) = 2-C-methyl-D-erythritol 2,4-cyclic diphosphate + reduced [flavodoxin]. Its pathway is isoprenoid biosynthesis; isopentenyl diphosphate biosynthesis via DXP pathway; isopentenyl diphosphate from 1-deoxy-D-xylulose 5-phosphate: step 5/6. In terms of biological role, converts 2C-methyl-D-erythritol 2,4-cyclodiphosphate (ME-2,4cPP) into 1-hydroxy-2-methyl-2-(E)-butenyl 4-diphosphate. This Leptospira borgpetersenii serovar Hardjo-bovis (strain L550) protein is 4-hydroxy-3-methylbut-2-en-1-yl diphosphate synthase (flavodoxin).